The following is a 94-amino-acid chain: Large ribosomal subunit protein uL23 (94 aa).

This sequence belongs to the universal ribosomal protein uL23 family. In terms of assembly, part of the 50S ribosomal subunit. Contacts protein L29, and trigger factor when it is bound to the ribosome.

Functionally, one of the early assembly proteins it binds 23S rRNA. One of the proteins that surrounds the polypeptide exit tunnel on the outside of the ribosome. Forms the main docking site for trigger factor binding to the ribosome. The protein is Large ribosomal subunit protein uL23 of Exiguobacterium sibiricum (strain DSM 17290 / CCUG 55495 / CIP 109462 / JCM 13490 / 255-15).